The primary structure comprises 648 residues: Replication restart protein PriA (648 aa).

Residues 131-297 enclose the Helicase ATP-binding domain; it reads TILNESNKPT…KTHKYQLVTL (167 aa). 144 to 151 contacts ATP; it reads GVTGSGKT. The short motif at 240–243 is the DEAH box element; the sequence is DEEH. Residues Cys358, Cys361, Cys367, Cys370, Cys385, Cys388, Cys398, and Cys401 each contribute to the Zn(2+) site. Residues 375–548 form the Helicase C-terminal domain; that stretch reads VLHKATKKLE…RFFTNELEIR (174 aa).

Belongs to the helicase family. PriA subfamily. In terms of assembly, component of the replication restart primosome. Zn(2+) serves as cofactor.

The enzyme catalyses Couples ATP hydrolysis with the unwinding of duplex DNA by translocating in the 3'-5' direction.. It catalyses the reaction ATP + H2O = ADP + phosphate + H(+). In terms of biological role, initiates the restart of stalled replication forks, which reloads the replicative helicase on sites other than the origin of replication. Recognizes and binds to abandoned replication forks and remodels them to uncover a helicase loading site. Promotes assembly of the primosome at these replication forks. In Rickettsia prowazekii (strain Madrid E), this protein is Replication restart protein PriA.